The chain runs to 259 residues: MDSLRLGTYTFSSRLILGTGKFSSTSAMIKAVRASGTQLVTVALRRFNREQAEDDLFGPLSEIEGLTLMPNTSGAATAKEAIKAAHIARELSGSPFIKVEIHPNPHHLMPDPIETWEACKILAAEGFIVMPYIPADPVLAKRLEEVGCSSVMPLGSAIGSGQGLSTAEMVKIIIRESSVPVIVDAGLRSPSEACAAMEMGCEAVLVNSAVAVARDPAAMALAFAKAVEAGFEARNAGLMPRSGSAVATSPLTSFLGATR.

The active-site Schiff-base intermediate with DXP is the K98. 1-deoxy-D-xylulose 5-phosphate contacts are provided by residues G159, 185–186 (AG), and 207–208 (NS).

Belongs to the ThiG family. Homotetramer. Forms heterodimers with either ThiH or ThiS.

It localises to the cytoplasm. The enzyme catalyses [ThiS sulfur-carrier protein]-C-terminal-Gly-aminoethanethioate + 2-iminoacetate + 1-deoxy-D-xylulose 5-phosphate = [ThiS sulfur-carrier protein]-C-terminal Gly-Gly + 2-[(2R,5Z)-2-carboxy-4-methylthiazol-5(2H)-ylidene]ethyl phosphate + 2 H2O + H(+). It functions in the pathway cofactor biosynthesis; thiamine diphosphate biosynthesis. Its function is as follows. Catalyzes the rearrangement of 1-deoxy-D-xylulose 5-phosphate (DXP) to produce the thiazole phosphate moiety of thiamine. Sulfur is provided by the thiocarboxylate moiety of the carrier protein ThiS. In vitro, sulfur can be provided by H(2)S. In Chlorobaculum tepidum (strain ATCC 49652 / DSM 12025 / NBRC 103806 / TLS) (Chlorobium tepidum), this protein is Thiazole synthase.